Here is a 173-residue protein sequence, read N- to C-terminus: uncharacterized protein (173 aa).

One can recognise an MSP domain in the interval 16 to 133 (DLVLRPETIT…KHVLIRFPNK (118 aa)). The span at 141-163 (KKMEEDDMKQQKERNKLSNEKMG) shows a compositional bias: basic and acidic residues. The disordered stretch occupies residues 141–173 (KKMEEDDMKQQKERNKLSNEKMGIRNQNMGEKK).

This is an uncharacterized protein from Caenorhabditis elegans.